Here is a 514-residue protein sequence, read N- to C-terminus: Folylpolyglutamate synthase (514 aa).

82 to 85 (GKGS) is an ATP binding site. Positions 107, 186, and 214 each coordinate Mg(2+). 2 residues coordinate ATP: Arg339 and Asp355.

Belongs to the folylpolyglutamate synthase family. Requires a monovalent cation as cofactor.

Its subcellular location is the mitochondrion inner membrane. The protein localises to the mitochondrion matrix. It is found in the cytoplasm. The enzyme catalyses (6S)-5,6,7,8-tetrahydrofolyl-(gamma-L-Glu)(n) + L-glutamate + ATP = (6S)-5,6,7,8-tetrahydrofolyl-(gamma-L-Glu)(n+1) + ADP + phosphate + H(+). The protein operates within cofactor biosynthesis; tetrahydrofolylpolyglutamate biosynthesis. Catalyzes conversion of folates to polyglutamate derivatives allowing concentration of folate compounds in the cell and the intracellular retention of these cofactors, which are important substrates for most of the folate-dependent enzymes that are involved in one-carbon transfer reactions involved in purine, pyrimidine and amino acid synthesis. The protein is Folylpolyglutamate synthase (MET7) of Candida albicans (Yeast).